The sequence spans 146 residues: Protein translocase subunit SecE (146 aa).

Positions 1–81 are disordered; sequence MSDERYAASD…KVKKPKKSAD (81 aa). A compositionally biased stretch (gly residues) spans 10–20; the sequence is DGGGTEVGSGT. Polar residues predominate over residues 45–54; the sequence is RAANASNTGA. Basic and acidic residues predominate over residues 69 to 81; it reads KEGKVKKPKKSAD. The chain crosses the membrane as a helical span at residues 118 to 138; sequence VVLAFLAFMVALVGLADFGLA.

Belongs to the SecE/SEC61-gamma family. As to quaternary structure, component of the Sec protein translocase complex. Heterotrimer consisting of SecY, SecE and SecG subunits. The heterotrimers can form oligomers, although 1 heterotrimer is thought to be able to translocate proteins. Interacts with the ribosome. Interacts with SecDF, and other proteins may be involved. Interacts with SecA.

It localises to the cell membrane. In terms of biological role, essential subunit of the Sec protein translocation channel SecYEG. Clamps together the 2 halves of SecY. May contact the channel plug during translocation. This chain is Protein translocase subunit SecE, found in Mycobacterium leprae (strain TN).